Reading from the N-terminus, the 305-residue chain is Taste receptor type 2 member 13 (305 aa).

Residues 1 to 7 lie on the Extracellular side of the membrane; it reads MGSSLYD. Residues 8 to 28 form a helical membrane-spanning segment; it reads ILTIVMIAEFIFGNVTNGFIV. Residues 29 to 42 lie on the Cytoplasmic side of the membrane; it reads LTNCIAWLSKRTLS. The chain crosses the membrane as a helical span at residues 43-63; that stretch reads FIGWIQLFLAISRVVLIWEML. The Extracellular segment spans residues 64–88; the sequence is LAWLKYMKYSFSYLAGTELRVMMLT. A helical membrane pass occupies residues 89-109; that stretch reads WVVSNHFSLWLATILSIFYLL. The Cytoplasmic segment spans residues 110 to 128; the sequence is KIASFSRPVFLYLKWRVKK. Residues 129-149 traverse the membrane as a helical segment; that stretch reads VLLLILLGNLIFLMFNILQIN. Residues 150–182 lie on the Extracellular side of the membrane; the sequence is THIEDWMDQYKRNITWDSRVNEFVGFSNLVLLE. Residue Asn162 is glycosylated (N-linked (GlcNAc...) asparagine). Residues 183-203 form a helical membrane-spanning segment; sequence MIMFSVTPFTVALVSFILLIF. The Cytoplasmic portion of the chain corresponds to 204–232; it reads SLWKHLQKMHLSSRGERDPSTKAHVNALR. The chain crosses the membrane as a helical span at residues 233–253; sequence IMVSFLLLYATYFISFFISLI. The Extracellular segment spans residues 254-262; that stretch reads PMAHKKGLD. A helical membrane pass occupies residues 263–283; that stretch reads LMFSLTVGLFYPSSHSFILIL. The Cytoplasmic portion of the chain corresponds to 284–305; it reads GHSNLRHSSCLVITYLRCKEKD.

Belongs to the G-protein coupled receptor T2R family. Expressed in subsets of taste receptor cells of the tongue and palate epithelium and exclusively in gustducin-positive cells. Expressed in 15% taste bud cells in circumvallate and foliate papillae but only in 2% in fungiform papillae. Expressed in the duodenum, antrum and fundus (part of the stomach).

Its subcellular location is the membrane. Its function is as follows. Receptor that may play a role in the perception of bitterness and is gustducin-linked. May play a role in sensing the chemical composition of the gastrointestinal content. The activity of this receptor may stimulate alpha gustducin, mediate PLC-beta-2 activation and lead to the gating of TRPM5. The protein is Taste receptor type 2 member 13 (Tas2r13) of Rattus norvegicus (Rat).